We begin with the raw amino-acid sequence, 87 residues long: Small ribosomal subunit protein bS20 (87 aa).

It belongs to the bacterial ribosomal protein bS20 family.

Its function is as follows. Binds directly to 16S ribosomal RNA. This Rickettsia bellii (strain OSU 85-389) protein is Small ribosomal subunit protein bS20.